A 781-amino-acid polypeptide reads, in one-letter code: Cytosolic phospholipase A2 beta (781 aa).

The 112-residue stretch at 1–112 (MAVAEVSRTC…RAGEFRRESF (112 aa)) folds into the C2 domain. Positions 26, 32, 82, 84, and 90 each coordinate Ca(2+). A PLA2c domain is found at 246–781 (EAGLRELAVR…VQRRRQRRPH (536 aa)). Ser-335 acts as the Nucleophile in catalysis. The active-site Proton acceptor is the Asp-615.

Ca(2+) serves as cofactor. As to expression, widely expressed. Expressed at higher level in brain, heart, liver, cerebellum and pancreas.

Its subcellular location is the cytoplasm. The protein localises to the cytosol. The protein resides in the mitochondrion membrane. It localises to the early endosome membrane. The enzyme catalyses a 1,2-diacyl-sn-glycero-3-phosphocholine + H2O = a 1-acyl-sn-glycero-3-phosphocholine + a fatty acid + H(+). It catalyses the reaction a 1-acyl-sn-glycero-3-phosphocholine + H2O = sn-glycerol 3-phosphocholine + a fatty acid + H(+). The catalysed reaction is 1-hexadecanoyl-2-(9Z,12Z-octadecadienoyl)-sn-glycero-3-phosphoethanolamine + H2O = 1-hexadecanoyl-sn-glycero-3-phosphoethanolamine + (9Z,12Z)-octadecadienoate + H(+). It carries out the reaction 1-hexadecanoyl-2-(5Z,8Z,11Z,14Z-eicosatetraenoyl)-sn-glycero-3-phosphoethanolamine + H2O = 1-hexadecanoyl-sn-glycero-3-phosphoethanolamine + (5Z,8Z,11Z,14Z)-eicosatetraenoate + H(+). The enzyme catalyses 1-hexadecanoyl-sn-glycero-3-phosphocholine + H2O = sn-glycerol 3-phosphocholine + hexadecanoate + H(+). It catalyses the reaction 1-hexadecanoyl-2-(5Z,8Z,11Z,14Z-eicosatetraenoyl)-sn-glycero-3-phosphocholine + H2O = 1-hexadecanoyl-sn-glycero-3-phosphocholine + (5Z,8Z,11Z,14Z)-eicosatetraenoate + H(+). The catalysed reaction is 1-hexadecanoyl-2-(5Z,8Z,11Z,14Z-eicosatetraenoyl)-sn-glycero-3-phosphocholine + H2O = 2-(5Z,8Z,11Z,14Z)-eicosatetraenoyl-sn-glycero-3-phosphocholine + hexadecanoate + H(+). Its activity is regulated as follows. Stimulated by cytosolic Ca(2+). Calcium-dependent phospholipase A1 and A2 and lysophospholipase that may play a role in membrane phospholipid remodeling. Functionally, calcium-dependent phospholipase A2 and lysophospholipase. Cleaves the ester bond of the fatty acyl group attached to the sn-2 position of phosphatidylethanolamines, producing lysophospholipids that may be used in deacylation-reacylation cycles. Hydrolyzes lysophosphatidylcholines with low efficiency but is inefficient toward phosphatidylcholines. In terms of biological role, calcium-dependent phospholipase A1 and A2 and lysophospholipase. Cleaves the ester bond of the fatty acyl group attached to the sn-1 or sn-2 position of diacyl phospholipids (phospholipase A1 and A2 activity, respectively), producing lysophospholipids that may be used in deacylation-reacylation cycles. Can further hydrolyze lysophospholipids enabling complete deacylation. Has no activity toward alkylacyl phospholipids. This Homo sapiens (Human) protein is Cytosolic phospholipase A2 beta (PLA2G4B).